A 341-amino-acid polypeptide reads, in one-letter code: Porin-like protein L (341 aa).

A signal peptide spans 1–21 (MNKKLIALAVAAASISSVATA).

Belongs to the Gram-negative porin family. As to quaternary structure, homotrimer.

The protein resides in the cell outer membrane. Its function is as follows. Forms pores that allow passive diffusion of small molecules across the outer membrane. The chain is Porin-like protein L (ompL) from Photobacterium profundum (strain SS9).